A 365-amino-acid chain; its full sequence is Histidinol-phosphate aminotransferase (365 aa).

The disordered stretch occupies residues 1 to 22; the sequence is MSRPVPNPGILDIAPYTPGKSP. The residue at position 221 (Lys-221) is an N6-(pyridoxal phosphate)lysine.

The protein belongs to the class-II pyridoxal-phosphate-dependent aminotransferase family. Histidinol-phosphate aminotransferase subfamily. Homodimer. Requires pyridoxal 5'-phosphate as cofactor.

The enzyme catalyses L-histidinol phosphate + 2-oxoglutarate = 3-(imidazol-4-yl)-2-oxopropyl phosphate + L-glutamate. The protein operates within amino-acid biosynthesis; L-histidine biosynthesis; L-histidine from 5-phospho-alpha-D-ribose 1-diphosphate: step 7/9. The chain is Histidinol-phosphate aminotransferase from Rhodopseudomonas palustris (strain BisB5).